A 268-amino-acid chain; its full sequence is Tryptophan synthase alpha chain (268 aa).

Residues Glu49 and Asp60 each act as proton acceptor in the active site.

This sequence belongs to the TrpA family. As to quaternary structure, tetramer of two alpha and two beta chains.

The catalysed reaction is (1S,2R)-1-C-(indol-3-yl)glycerol 3-phosphate + L-serine = D-glyceraldehyde 3-phosphate + L-tryptophan + H2O. The protein operates within amino-acid biosynthesis; L-tryptophan biosynthesis; L-tryptophan from chorismate: step 5/5. The alpha subunit is responsible for the aldol cleavage of indoleglycerol phosphate to indole and glyceraldehyde 3-phosphate. The polypeptide is Tryptophan synthase alpha chain (Mannheimia succiniciproducens (strain KCTC 0769BP / MBEL55E)).